Here is a 182-residue protein sequence, read N- to C-terminus: SAGA-associated factor 11 homolog (182 aa).

A disordered region spans residues 61 to 84; that stretch reads GSGAAVEGEPEDSKPYTIVDQPDT. Residues 98 to 119 form an SGF11-type zinc finger; sequence CHCPNCNRIVAASRFAPHLEKC. The interval 133-182 is disordered; that stretch reads RIANTRDVGTGNYFGGDEDDEDDADWSGEKRKKKISQVRTNGSKKNGKTS. The span at 148 to 158 shows a compositional bias: acidic residues; that stretch reads GDEDDEDDADW.

The protein belongs to the SGF11 family. In terms of assembly, component of some SAGA transcription coactivator-HAT complexes. Within the SAGA complex, participates in a subcomplex of SAGA called the DUB module (deubiquitination module).

The protein resides in the nucleus. Component of the transcription regulatory histone acetylation (HAT) complex SAGA, a multiprotein complex that activates transcription by remodeling chromatin and mediating histone acetylation and deubiquitination. Within the SAGA complex, participates in a subcomplex that specifically deubiquitinates histone H2B. The SAGA complex is recruited to specific gene promoters by activators, where it is required for transcription. The sequence is that of SAGA-associated factor 11 homolog from Anopheles gambiae (African malaria mosquito).